The following is a 439-amino-acid chain: Cytochrome b-c1 complex reductase subunit, mitochondrial (439 aa).

The transit peptide at 1-17 (MIRGSSALKSLTSRRLY) directs the protein to the mitochondrion.

The protein belongs to the peptidase M16 family. UQCRC1/QCR1 subfamily. In terms of assembly, component of the ubiquinol-cytochrome c oxidoreductase (cytochrome b-c1 complex, complex III, CIII), a multisubunit enzyme composed of 10 subunits. The complex is composed of 3 respiratory subunits cytochrome b (COB), cytochrome c1 (CYT1) and Rieske protein (RIP1), 2 core protein subunits COR1 and QCR2, and 5 low-molecular weight protein subunits QCR6, QCR7, QCR8, QCR9 and QCR10. The complex exists as an obligatory dimer and forms supercomplexes (SCs) in the inner mitochondrial membrane with a monomer or a dimer of cytochrome c oxidase (complex IV, CIV), resulting in 2 different assemblies (supercomplexes III(2)IV and III(2)IV(2)).

It is found in the mitochondrion inner membrane. Its function is as follows. Component of the ubiquinol-cytochrome c oxidoreductase, a multisubunit transmembrane complex that is part of the mitochondrial electron transport chain which drives oxidative phosphorylation. The complex plays an important role in the uptake of multiple carbon sources present in different host niches. The chain is Cytochrome b-c1 complex reductase subunit, mitochondrial from Candida albicans (strain SC5314 / ATCC MYA-2876) (Yeast).